Reading from the N-terminus, the 88-residue chain is Phosphoribosyl-ATP pyrophosphatase (88 aa).

This sequence belongs to the PRA-PH family.

The protein resides in the cytoplasm. The catalysed reaction is 1-(5-phospho-beta-D-ribosyl)-ATP + H2O = 1-(5-phospho-beta-D-ribosyl)-5'-AMP + diphosphate + H(+). It participates in amino-acid biosynthesis; L-histidine biosynthesis; L-histidine from 5-phospho-alpha-D-ribose 1-diphosphate: step 2/9. The protein is Phosphoribosyl-ATP pyrophosphatase of Cutibacterium acnes (strain DSM 16379 / KPA171202) (Propionibacterium acnes).